The sequence spans 433 residues: Serine/threonine-protein kinase toxin HipA (433 aa).

Ser-147 carries the phosphoserine; by autocatalysis modification. ATP-binding positions include 151-154 (VQPK), Lys-178, and 220-222 (ERF). Residue Asp-306 is the Proton acceptor of the active site. ATP-binding positions include 308-311 (HGKN) and 327-328 (YD). DNA-binding regions lie at residues 380-384 (RIARR) and Arg-429.

The protein belongs to the HipA Ser/Thr kinase family. Monomer. Forms a HipA(2)HipB(2)-DNA complex with cognate antitoxin HipB; has higher affinity for the latter when HipB is prebound to DNA and HipA is phosphorylated. Binds DNA in the ternary complex.

The enzyme catalyses L-seryl-[protein] + ATP = O-phospho-L-seryl-[protein] + ADP + H(+). It catalyses the reaction L-threonyl-[protein] + ATP = O-phospho-L-threonyl-[protein] + ADP + H(+). Functionally, toxic component of a type II toxin-antitoxin (TA) system; overexpression in wild-type temporarily inhibits cell growth, overexpression in a hipAB deletion leads to acute growth inhibition. The toxic effect of HipA is neutralized by its cognate antitoxin HipB. In the ternary phosphoserine-HipA-HipB-DNA complex the DNA is bent about 125 degrees; all HipA in the crystallized ternary complex is phosphorylated. In E.coli phosphorylation of HipA is thought to release HipB from the HipA-HipB-DNA complex, suggesting the complex functions differently in the 2 bacteria. Phosphorylates Glu-tRNA-ligase (GltX, on 'Ser-239') in vivo, with HipB probably acts as a corepressor for transcription of the hipBA promoter. In Shewanella oneidensis (strain ATCC 700550 / JCM 31522 / CIP 106686 / LMG 19005 / NCIMB 14063 / MR-1), this protein is Serine/threonine-protein kinase toxin HipA.